The sequence spans 465 residues: Gamma-aminobutyric acid receptor subunit alpha-6 (465 aa).

Residues 1 to 19 (MALLIAWVCVAVSIEKALG) form the signal peptide. The Extracellular segment spans residues 20–243 (GQGDGGDLYS…FHLQRKMGYF (224 aa)). Asn31 carries N-linked (GlcNAc...) asparagine glycosylation. 4-aminobutanoate is bound at residue Arg84. Asn128 and Asn141 each carry an N-linked (GlcNAc...) asparagine glycan. Thr147 contacts 4-aminobutanoate. Cysteines 156 and 170 form a disulfide. A helical membrane pass occupies residues 244–264 (MIQIYTPCIMTVILSQVSFWI). Residues 265 to 270 (NKESVP) lie on the Cytoplasmic side of the membrane. A helical membrane pass occupies residues 271–290 (ARTVFGITTVLTMTTLSISA). Over 291–304 (RHSLPKVSYATAMD) the chain is Extracellular. The helical transmembrane segment at 305 to 325 (WFIAVCFAFVFSALIEFAAVN) threads the bilayer. Residues 326–424 (YFTNLQTQRA…GTSKIDQYSR (99 aa)) are Cytoplasmic-facing. The disordered stretch occupies residues 392–415 (NSASQCQPVSAPPPAPPAPPPVGG). Residues 401–413 (SAPPPAPPAPPPV) are compositionally biased toward pro residues. Residues 425 to 445 (ILFPVAFAGFNLVYWVVYLSK) form a helical membrane-spanning segment. Residues 446–465 (DTMEFFEPTAMHLRNDHQSN) lie on the Extracellular side of the membrane.

Belongs to the ligand-gated ion channel (TC 1.A.9) family. Gamma-aminobutyric acid receptor (TC 1.A.9.5) subfamily. GABRA6 sub-subfamily. As to quaternary structure, heteropentamer, formed by a combination of alpha (GABRA1-6), beta (GABRB1-3), gamma (GABRG1-3), delta (GABRD), epsilon (GABRE), rho (GABRR1-3), pi (GABRP) and theta (GABRQ) chains, each subunit exhibiting distinct physiological and pharmacological properties. As to expression, expressed in brain, in cerebellar granule cells.

The protein resides in the postsynaptic cell membrane. It is found in the cell membrane. The catalysed reaction is chloride(in) = chloride(out). Alpha subunit of the heteropentameric ligand-gated chloride channel gated by gamma-aminobutyric acid (GABA), a major inhibitory neurotransmitter in the brain. GABA-gated chloride channels, also named GABA(A) receptors (GABAAR), consist of five subunits arranged around a central pore and contain GABA active binding site(s) located at the alpha and beta subunit interface(s). When activated by GABA, GABAARs selectively allow the flow of chloride anions across the cell membrane down their electrochemical gradient. The chain is Gamma-aminobutyric acid receptor subunit alpha-6 (GABRA6) from Gallus gallus (Chicken).